A 340-amino-acid polypeptide reads, in one-letter code: Mitochondrial amidoxime-reducing component 1 (340 aa).

Residue Gly-2 is the site of N-myristoyl glycine attachment. Over 2-24 (GAGSWALTLFGFSAFRVPGQPRS) the chain is Mitochondrial matrix. Residues 25–44 (TWLGVAALGLAAVALGTVAW) traverse the membrane as a helical; Signal-anchor for type II membrane protein segment. At 45 to 340 (RRARPRRRRR…VGDPVYLLGQ (296 aa)) the chain is on the cytoplasmic side. Mo-molybdopterin is bound by residues Lys-70, Ser-71, and Arg-95. Residues 96–186 (FWLVINEEGN…KMQSCRLVHF (91 aa)) are MOSC N-terminal region. Residues 191 to 338 (RPRSSRQMKA…IRVGDPVYLL (148 aa)) form the MOSC domain. Positions 214, 241, 243, 274, 275, 276, and 320 each coordinate Mo-molybdopterin.

As to quaternary structure, component of a complex composed of cytochrome b5, NADH-cytochrome b5 reductase and MTARC1. Requires Mo-molybdopterin as cofactor.

The protein resides in the mitochondrion outer membrane. Its subcellular location is the membrane. The enzyme catalyses N(omega)-hydroxy-L-arginine + 2 Fe(II)-[cytochrome b5] + 2 H(+) = L-arginine + 2 Fe(III)-[cytochrome b5] + H2O. Catalyzes the reduction of N-oxygenated molecules, acting as a counterpart of cytochrome P450 and flavin-containing monooxygenases in metabolic cycles. As a component of prodrug-converting system, reduces a multitude of N-hydroxylated prodrugs particularly amidoximes, leading to increased drug bioavailability. May be involved in mitochondrial N(omega)-hydroxy-L-arginine (NOHA) reduction, regulating endogenous nitric oxide levels and biosynthesis. Postulated to cleave the N-OH bond of N-hydroxylated substrates in concert with electron transfer from NADH to cytochrome b5 reductase then to cytochrome b5, the ultimate electron donor that primes the active site for substrate reduction. In Mus musculus (Mouse), this protein is Mitochondrial amidoxime-reducing component 1 (Mtarc1).